Here is a 61-residue protein sequence, read N- to C-terminus: Large ribosomal subunit protein bL32 (61 aa).

A compositionally biased stretch (basic residues) spans 1-22 (MAVPKKKTSKSRRDMRRSHHAL). The interval 1–27 (MAVPKKKTSKSRRDMRRSHHALKPSAY) is disordered.

It belongs to the bacterial ribosomal protein bL32 family.

The sequence is that of Large ribosomal subunit protein bL32 from Rhodospirillum rubrum (strain ATCC 11170 / ATH 1.1.1 / DSM 467 / LMG 4362 / NCIMB 8255 / S1).